Here is a 372-residue protein sequence, read N- to C-terminus: Alpha-parvin (372 aa).

Low complexity predominate over residues 1–11 (MATSPQKSPSV). The segment at 1-44 (MATSPQKSPSVPKSPTPKSPPSRKKDDSFLGKLGGTLARRKKAK) is disordered. A2 is modified (N-acetylalanine). S8, S14, and S19 each carry phosphoserine. Residues 21-25 (PSRKK) form an interaction with ARHGAP31 region. Phosphoserine is present on residues S28 and S62. Calponin-homology (CH) domains are found at residues 95–202 (QELM…QYFR) and 262–369 (NVVK…TKYR). Residues 223–372 (GILQSRQIQE…NLFTKYRNVE (150 aa)) form a required for interaction with TESK1 and ILK region.

The protein belongs to the parvin family. Component of the heterotrimeric IPP (ILK-PINCH-PARVIN) complex composed of ILK, LIMS1/PINCH and PARVA; the complex binds to F-actin via the C-terminal tail of LIMS1 and the N-terminal region of PARVA, promoting F-actin filament bundling. Interacts with TGFB1I1. Interacts with ARHGAP31. Interacts with the actin cytoskeleton. Interacts (via C-terminus) with TESK1 (via C-terminus); the interaction inhibits TESK1 kinase activity. Interacts with PXN/PAXILLIN (via LD motif 4). In terms of tissue distribution, widely expressed.

It is found in the cell junction. It localises to the focal adhesion. The protein resides in the cell membrane. The protein localises to the cytoplasm. Its subcellular location is the cytoskeleton. It is found in the myofibril. It localises to the sarcomere. The protein resides in the z line. In terms of biological role, plays a role in sarcomere organization and in smooth muscle cell contraction. Required for normal development of the embryonic cardiovascular system, and for normal septation of the heart outflow tract. Plays a role in sprouting angiogenesis and is required for normal adhesion of vascular smooth muscle cells to endothelial cells during blood vessel development. Plays a role in the reorganization of the actin cytoskeleton, formation of lamellipodia and ciliogenesis. Plays a role in the establishment of cell polarity, cell adhesion, cell spreading, and directed cell migration. Within the IPP (ILK-PINCH-PARVIN) complex, binds to F-actin, promoting F-actin bundling, a process required to generate force for actin cytoskeleton reorganization and subsequent dynamic cell adhesion events such as cell spreading and migration. This Rattus norvegicus (Rat) protein is Alpha-parvin (Parva).